The following is a 428-amino-acid chain: Adenylosuccinate synthetase (428 aa).

Residues 12–18 and 40–42 contribute to the GTP site; these read GDEGKGK and GHT. D13 functions as the Proton acceptor in the catalytic mechanism. Mg(2+) is bound by residues D13 and G40. IMP-binding positions include 13-16, 38-41, T128, R142, Q223, T238, and R302; these read DEGK and NAGH. Catalysis depends on H41, which acts as the Proton donor. 298–304 contributes to the substrate binding site; the sequence is VTTGRPR. GTP is bound by residues R304, 330–332, and 413–415; these read KLD and GVG.

The protein belongs to the adenylosuccinate synthetase family. Homodimer. It depends on Mg(2+) as a cofactor.

Its subcellular location is the cytoplasm. The enzyme catalyses IMP + L-aspartate + GTP = N(6)-(1,2-dicarboxyethyl)-AMP + GDP + phosphate + 2 H(+). It functions in the pathway purine metabolism; AMP biosynthesis via de novo pathway; AMP from IMP: step 1/2. Plays an important role in the de novo pathway of purine nucleotide biosynthesis. Catalyzes the first committed step in the biosynthesis of AMP from IMP. The sequence is that of Adenylosuccinate synthetase from Acidothermus cellulolyticus (strain ATCC 43068 / DSM 8971 / 11B).